The following is a 43-amino-acid chain: Bacteriocin weissellin-A (43 aa).

Cysteines 9 and 14 form a disulfide.

It localises to the secreted. In terms of biological role, highly active against Gram-positive bacteria M.flavus strain ATCC 400, M.luteus strain CECT241, C.soprogenes strain NCTC533, L.monocytogenes strain ATCC 19111, L.inocua strain ATCC BAA-680D and S.carnosus strain LMG13564. Less active against B.cereus strain LMG13569, C.thiaminolyticum strain ATCC 15579, E.faecalis strain NCTC8176, L.lactis strain LM0230, L.casei strain ATCC 344, L.lactis strain IL1403, L.jensenii strain ATCC 25258, L.plantarum strain CECT220, L.brevis strain ATCC 8287, L.bulgaricus strain LMG13551, P.acidilactici strain ATCC 25740, P.pentosaceus strain ATCC 33316 and P.pentosaceus strain LMG13560. Weakly active against L.mesenteroides strain ATCC 19254, L.lactis strain ATCC 1454, L.sakei strain CECT906T, L.lactis subsp. cremoris strain MC1363 and L.curvatus strain ATCC 51436. Not active against Gram-negative bacterium S.enteritidis strain ATCC 13076. The mode of action appears to be non-lytic. Inactivated by proteinase K, but insensitive to trypsin, alpha-chymotrypsin, pepsin and papain. The polypeptide is Bacteriocin weissellin-A (Weissella paramesenteroides (Leuconostoc paramesenteroides)).